We begin with the raw amino-acid sequence, 397 residues long: Ribosomal RNA large subunit methyltransferase I (397 aa).

One can recognise a PUA domain in the interval 2–79 (TAAIYLVKGR…KEEINKAFFV (78 aa)).

Belongs to the methyltransferase superfamily. RlmI family.

The protein resides in the cytoplasm. The catalysed reaction is cytidine(1962) in 23S rRNA + S-adenosyl-L-methionine = 5-methylcytidine(1962) in 23S rRNA + S-adenosyl-L-homocysteine + H(+). Functionally, specifically methylates the cytosine at position 1962 (m5C1962) of 23S rRNA. This chain is Ribosomal RNA large subunit methyltransferase I, found in Vibrio parahaemolyticus serotype O3:K6 (strain RIMD 2210633).